The sequence spans 155 residues: Small ribosomal subunit protein mS86 (155 aa).

Residues 1–27 (MHYMGLFSRAGNIFRQPRALQASNAML) constitute a mitochondrion transit peptide. Positions 36–114 (SKIFVGGLSP…RIIGVHPADS (79 aa)) constitute an RRM domain.

This sequence belongs to the GR-RBP family. Component of the mitochondrial ribosome small subunit.

It localises to the mitochondrion. Functionally, possibly has a role in RNA transcription or processing during stress. This Arabidopsis thaliana (Mouse-ear cress) protein is Small ribosomal subunit protein mS86 (RBG6).